Reading from the N-terminus, the 4450-residue chain is Gramicidin S synthase 2 (4450 aa).

Positions 467 to 1044 (DKTIHQLFTE…IQEISNYING (578 aa)) are domain 1 (proline-activating). Carrier domains lie at 971 to 1046 (VPTN…NGAK), 2006 to 2081 (APSS…ADGE), 3051 to 3126 (APRT…EETD), and 4089 to 4164 (APRN…THQE). 4 positions are modified to O-(pantetheine 4'-phosphoryl)serine: S1006, S2041, S3086, and S4124. Residues 1521-2080 (DHVAVGWKDQ…SALAQYIADG (560 aa)) form a domain 2 (valine-activating) region. Positions 2538–3134 (YATNKIFHEL…TDTEQYMAIQ (597 aa)) are domain 3 (ornithine-activating). Residues 3590-4172 (IQELFEEQVK…QESENNVHQP (583 aa)) form a domain 4 (leucine-activating) region.

This sequence belongs to the ATP-dependent AMP-binding enzyme family. In terms of assembly, large multienzyme complex of GrsA and GrsB. Pantetheine 4'-phosphate serves as cofactor.

Its pathway is antibiotic biosynthesis; gramicidin S biosynthesis. Its function is as follows. This protein is a multifunctional enzyme, able to activate and polymerize the amino acids Pro, Val, Orn and Leu. Activation sites for these AA consist of individual domains. The chain is Gramicidin S synthase 2 (grsB) from Brevibacillus brevis (Bacillus brevis).